The sequence spans 100 residues: MHSVCSIFLSCSHRVIQAKHPPFPLFHSYFHIPDFLSFVFPFVASPPLAFARRKLDHVPKKFARSIGPFLLIVFLFFNLFPTFFFLPFFPDTTKRPNLAD.

Helical transmembrane passes span 30–50 (FHIP…PLAF) and 69–89 (FLLI…LPFF).

Its subcellular location is the cytoplasm. It localises to the nucleus membrane. This is an uncharacterized protein from Schizosaccharomyces pombe (strain 972 / ATCC 24843) (Fission yeast).